The primary structure comprises 492 residues: Probable malate:quinone oxidoreductase 1 (492 aa).

The protein belongs to the MQO family. It depends on FAD as a cofactor.

It carries out the reaction (S)-malate + a quinone = a quinol + oxaloacetate. Its pathway is carbohydrate metabolism; tricarboxylic acid cycle; oxaloacetate from (S)-malate (quinone route): step 1/1. The polypeptide is Probable malate:quinone oxidoreductase 1 (Staphylococcus aureus (strain MW2)).